We begin with the raw amino-acid sequence, 612 residues long: Dihydroxy-acid dehydratase (612 aa).

Asp81 is a Mg(2+) binding site. Cys122 serves as a coordination point for [2Fe-2S] cluster. Asp123 and Lys124 together coordinate Mg(2+). N6-carboxylysine is present on Lys124. Cys193 serves as a coordination point for [2Fe-2S] cluster. Glu489 lines the Mg(2+) pocket. Residue Ser515 is the Proton acceptor of the active site.

Belongs to the IlvD/Edd family. In terms of assembly, homodimer. Requires [2Fe-2S] cluster as cofactor. The cofactor is Mg(2+).

The enzyme catalyses (2R)-2,3-dihydroxy-3-methylbutanoate = 3-methyl-2-oxobutanoate + H2O. The catalysed reaction is (2R,3R)-2,3-dihydroxy-3-methylpentanoate = (S)-3-methyl-2-oxopentanoate + H2O. Its pathway is amino-acid biosynthesis; L-isoleucine biosynthesis; L-isoleucine from 2-oxobutanoate: step 3/4. The protein operates within amino-acid biosynthesis; L-valine biosynthesis; L-valine from pyruvate: step 3/4. In terms of biological role, functions in the biosynthesis of branched-chain amino acids. Catalyzes the dehydration of (2R,3R)-2,3-dihydroxy-3-methylpentanoate (2,3-dihydroxy-3-methylvalerate) into 2-oxo-3-methylpentanoate (2-oxo-3-methylvalerate) and of (2R)-2,3-dihydroxy-3-methylbutanoate (2,3-dihydroxyisovalerate) into 2-oxo-3-methylbutanoate (2-oxoisovalerate), the penultimate precursor to L-isoleucine and L-valine, respectively. The chain is Dihydroxy-acid dehydratase from Xanthomonas campestris pv. campestris (strain 8004).